We begin with the raw amino-acid sequence, 159 residues long: S-ribosylhomocysteine lyase (159 aa).

Positions 53, 57, and 124 each coordinate Fe cation.

The protein belongs to the LuxS family. Homodimer. Fe cation serves as cofactor.

The enzyme catalyses S-(5-deoxy-D-ribos-5-yl)-L-homocysteine = (S)-4,5-dihydroxypentane-2,3-dione + L-homocysteine. Functionally, involved in the synthesis of autoinducer 2 (AI-2) which is secreted by bacteria and is used to communicate both the cell density and the metabolic potential of the environment. The regulation of gene expression in response to changes in cell density is called quorum sensing. Catalyzes the transformation of S-ribosylhomocysteine (RHC) to homocysteine (HC) and 4,5-dihydroxy-2,3-pentadione (DPD). This Porphyromonas gingivalis (strain ATCC BAA-308 / W83) protein is S-ribosylhomocysteine lyase.